A 992-amino-acid polypeptide reads, in one-letter code: Epstein-Barr nuclear antigen 6 (992 aa).

The segment at 1–70 is disordered; sequence MESFEGQGDS…SRGDENRGWM (70 aa). The span at 12–31 shows a compositional bias: basic and acidic residues; sequence QSPDNERGDNVQTTGEHDQD. The interval 130–159 is interaction with host PIM1; it reads LILDSGLDTQHILCFVMAARQRLQDIRRGP. Disordered stretches follow at residues 355–905, 931–954, and 967–992; these read ATGG…DSMA, PLDI…PARC, and DNSE…SELD. Over residues 381–391 the composition is skewed to acidic residues; that stretch reads VELESSDDELP. Polar residues predominate over residues 445-461; sequence AQSTPERPGPSEQSSVT. Pro residues predominate over residues 479-495; the sequence is QPPPVPKPVPVKPTPPP. Positions 506–520 are enriched in acidic residues; the sequence is YDDDVIEVIDVETTE. One copy of the 1-1; approximate repeat lies at 551-555; sequence PPTVS. The segment at 551-610 is 12 X 5 AA approximate tandem repeats of P-P-A-A-G; sequence PPTVSPSDTGPPAVGPPAAGPPAAGPPAAGPPAAGPPAAGPPAAGPRILAPLSAGPPAAG. A 2-1; approximate repeat occupies 556–560; it reads PSDTG. A 3-1; approximate repeat occupies 561–565; that stretch reads PPAVG. Residues 563–594 show a composition bias toward pro residues; sequence AVGPPAAGPPAAGPPAAGPPAAGPPAAGPPAA. Tandem repeats lie at residues 566 to 570, 571 to 575, 576 to 580, 581 to 585, 586 to 590, and 591 to 595. Residues 595-611 are compositionally biased toward low complexity; it reads GPRILAPLSAGPPAAGP. The 10-1; approximate repeat unit spans residues 596 to 600; that stretch reads PRILA. One copy of the 11-1; approximate repeat lies at 601–605; it reads PLSAG. The stretch at 606-610 is one 12-1 repeat; the sequence is PPAAG. Polar residues-rich tracts occupy residues 659-676 and 700-714; these read TQMQ…TQPT and IESS…TQPI. Over residues 715–724 the composition is skewed to basic and acidic residues; sequence SHEEQPRYED. Low complexity-rich tracts occupy residues 738–764 and 772–781; these read AAQP…QGYQ and PYQGYQEPPA. 3 tandem repeats follow at residues 741 to 753, 754 to 766, and 767 to 779. The interval 741–779 is 3 X 13 AA tandem repeats of P-[AP]-P-Q-A-P-Y-Q-G-Y-Q-E-P; the sequence is PAPQAPYQGYQEPPAPQAPYQGYQEPPPPQAPYQGYQEP. The segment covering 845–857 has biased composition (polar residues); the sequence is DQVSQFPHLQSET. Over residues 859–881 the composition is skewed to low complexity; the sequence is PPRLQLSLVPLVSSSAPSWSSPQ. Residues 882–899 show a composition bias toward pro residues; the sequence is PRAPIRPIPTRFPPPPMP.

Belongs to the herpesviridae EBNA-6 family. Interacts with host CTPB1; this interaction leads to gene repression, but also seems to interfere with the repressive function of CtBP pre-bound to DNA, leading to EBNA6 mediated up-regulation of many host genes. Interacts with host MYC; this interaction enhances MYC stability. Interacts (via N-terminus) with host RBPJ. Interacts (via N-terminus) with host histone H2AX; this interaction facilitates H2AX proteasomal degradation. Interacts with host TP73; this interaction inhibits TP73-mediated apoptotic pathway. Interacts (via N-terminus) with host PIM1; this interaction upregulates and stabilizes PIM1 and induces cell proliferation by inhibiting the growth suppressive properties of p21.

It localises to the host nucleus. It is found in the host nucleus matrix. Its function is as follows. Plays an essential role for the activation and immortalization of human B-cells. Represses transcription of viral promoters TP1 and Cp through interaction with host RBPJ, and inhibits EBNA2-mediated activation of these promoters. Targets host chromatin through interactions with host transcription factors, especially RBPJ and IRF4. Alternatively, EBNA6 also regulates the transcription of the EBV oncogene LMP1 in a cell cycle-dependent manner. Modulates the activity of several host proteins involved in cell cycle regulation including host cyclin A, MYC, RB, p21 and p27 mainly through binding to the host SCF(SKP2) complex. Inhibits the promoter of host H2AX and targets H2AX to proteasomal degradation in order to promote latency and cell proliferation. Upregulates host PIM1 expression and stabilization. Potentiates PIM1 to promote cell proliferation by inhibiting the growth suppressive properties of p21. The protein is Epstein-Barr nuclear antigen 6 (EBNA6) of Epstein-Barr virus (strain B95-8) (HHV-4).